The primary structure comprises 365 residues: MKKLRVGVLFGGRSGEHEVSLKSANSILNALDRELFEVIPIGIRKNGEWISGEAPLEELETGIKNQGNYAVSILPDPSKKVLWKLDPFEKISEIDLIFPVLHGTFGEDGTVQGFLDLCGIPYVGSGVLGSSLAMDKVMMKKILRRHGLQVANYYSFKRSEWEQDRDEIIFSIEKQLSYPIFVKPANLGSSVGISKVKNREELIQGIDLAVKYDMKCLAEEFIPGKEIELSILGNDNPKTSVPGEIIPANEFYDYNAKYINNKSKLVIPAPLSETLKTKIEDMGVEAFRVLDCYGLSRVDYFVLEDQEEVYINEINTMPGFTEISMYPKLWTESGLSYSQLLTDLIYLALARQQEKDRNSTDFSES.

Positions 140-346 (KKILRRHGLQ…YSQLLTDLIY (207 aa)) constitute an ATP-grasp domain. 173–228 (EKQLSYPIFVKPANLGSSVGISKVKNREELIQGIDLAVKYDMKCLAEEFIPGKEIE) contributes to the ATP binding site. Positions 299, 313, and 315 each coordinate Mg(2+).

The protein belongs to the D-alanine--D-alanine ligase family. It depends on Mg(2+) as a cofactor. The cofactor is Mn(2+).

It is found in the cytoplasm. It catalyses the reaction 2 D-alanine + ATP = D-alanyl-D-alanine + ADP + phosphate + H(+). It participates in cell wall biogenesis; peptidoglycan biosynthesis. Functionally, cell wall formation. The sequence is that of D-alanine--D-alanine ligase from Natranaerobius thermophilus (strain ATCC BAA-1301 / DSM 18059 / JW/NM-WN-LF).